Here is a 139-residue protein sequence, read N- to C-terminus: Lymphocyte antigen 6H (139 aa).

Positions 1-25 (MLPAAMKSLGLALLALLLCPSPAHG) are cleaved as a signal peptide. Residues 26–113 (LWCQDCTLAN…CEKDLCNGAS (88 aa)) form the UPAR/Ly6 domain. 5 disulfide bridges follow: cysteine 28–cysteine 51, cysteine 31–cysteine 39, cysteine 44–cysteine 72, cysteine 76–cysteine 103, and cysteine 104–cysteine 109. Asparagine 35 carries N-linked (GlcNAc...) asparagine glycosylation. Residue asparagine 110 is the site of GPI-anchor amidated asparagine attachment. A propeptide spans 111 to 139 (GASVAGRSPWALAGGLLLSLGPALLWAGP) (removed in mature form).

As to quaternary structure, interacts with CHRNA4 and CHRNA7. As to expression, strongly expressed in brain, also found in lower levels in eye and reproductive tissues.

It localises to the cell membrane. Its function is as follows. Believed to act as modulator of nicotinic acetylcholine receptors (nAChRs) activity. In vitro inhibits alpha-3:beta-4-containing nAChRs maximum response. In vitro inhibits alpha-3:beta-4-containing nAChRs maximum response. May play a role in the intracellular trafficking of alpha-7-containing nAChRs and may inhibit their expression at the cell surface. Seems to inhibit alpha-7/CHRNA7 signaling in hippocampal neurons. The chain is Lymphocyte antigen 6H (Ly6h) from Mus musculus (Mouse).